A 180-amino-acid polypeptide reads, in one-letter code: Putative manganese efflux pump MntP (180 aa).

The next 5 membrane-spanning stretches (helical) occupy residues 6–26, 33–53, 63–83, 101–121, and 130–150; these read VLLLAGALGTDAFSLCLGLGL, MAWMLVGLIVALHVVLPVAGW, VGRWAAYLGAAILFYLGVKMV, GFLGLTVLAGSVSMDALSVGF, and LLLTAGVIGLVAGLMSAAAFV.

This sequence belongs to the MntP (TC 9.B.29) family.

It is found in the cell membrane. Functionally, probably functions as a manganese efflux pump. The chain is Putative manganese efflux pump MntP from Desulforudis audaxviator (strain MP104C).